The primary structure comprises 354 residues: MESEYREMLLLTGLDHITEEELKRFKYFALTEFQIARSTLDVADRTELADHLIQSAGAASAVTKAINIFQKLNYMHIANALEEKKKEAERKLMTNTKKRGTQKVENRSQAENCSAASATRSDNDFKEQAATEVCPQAKPQKKQMVAEQEAIREDLQKDPLVVTVLKAINPFECETQEGRQEIFHATVATETDFFFVKVLNAQFKDKFIPKRTIKISNYLWHSNFMEVTSSSVVVDVESNHEVPNNVVKRARETPRISKLKIQPCGTIVNGLFKVQKITEEKDRVLYGIHDKTGTMEVLVLGNPSKTKCEEGDKIRLTFFEVSKNGVKIQLKSGPCSFFKVIKAAKPKTDMKSVE.

In terms of domain architecture, Pyrin spans methionine 1–glutamate 87. A disordered region spans residues asparagine 95–aspartate 124. Residues glutamine 109–arginine 120 show a composition bias toward polar residues. One can recognise an HIN-200 domain in the interval methionine 144 to isoleucine 341.

The protein belongs to the HIN-200 family. As to quaternary structure, self-associates; forms homooligomers in response to cytosolic double-stranded DNA (dsDNA) and the dsDNA seems to serve as oligomerization platform. Component of AIM2 inflammasome, which consists of a signal sensor component (AIM2), an adapter (PYCARD/ASC), which recruits an effector pro-inflammatory caspase (CASP1). Interacts (via pyrin domain) with PYCARD/ASC (via pyrin domain); interaction is direct. Component of the AIM2 PANoptosome complex, a multiprotein complex that drives inflammatory cell death (PANoptosis). Interacts with EIF2AK2/PKR. Interacts with MAPRE1. Interacts (via HIN-200 domain) with IFI202 (via HIN-200 domain 2); preventing activation of the AIM2 inflammasome. Interacts with RACK1; promoting association with PP2A phosphatase and dephosphorylation of AKT1. Interacts with TRIM11; promoting AIM2 recruitment to autophagosomes and autophagy-dependent degradation. In terms of processing, degraded via selective autophagy following interaction with TRIM11. As to expression, expressed in developing neurons. Highly expressed in regulatory T-cells (Treg).

It is found in the cytoplasm. The protein resides in the inflammasome. The protein localises to the nucleus. With respect to regulation, inactive in absence of double-stranded DNA (dsDNA). Homooligomerizes upon binding to dsDNA, dsDNA serving as an oligomerization platform. AIM2 requires large dsDNA to generate a structural template that couples dsDNA ligand-binding and homooligomerization. Homooligomerization is followed by recruitment of PYCARD/ASC to initiate speck formation (nucleation). AIM2 and PYCARD/ASC homooligomer filaments assemble bidirectionally and the recognition between AIM2 and PYCARD/ASC oligomers occurs in a head-to-tail manner. Clustered PYCARD/ASC nucleates the formation of CASP1 filaments through the interaction of their respective CARD domains, acting as a platform for CASP1 polymerization and activation. Active CASP1 then specifically processes protein precursors, such as gasdermin-D (GSDMD), IL1B and IL18, leading to the release of mature cytokines in the extracellular milieu or pyroptosis, depending on cell type. AIM2 can be activated in response to events that cause genomic DNA (HIV protease inhibitor nelfinavir) or mitochondrial DNA release in the cytoplasm (such as Perfluoroalkyl substance pollutants or cholesterol overload). Activation of the AIM2 inflammasome is inhibited by IFI202. Activation of the AIM2 inflammasome is inhibited by TRIM11, which promotes autophagy-dependent degradation of AIM2. Sensor component of the AIM2 inflammasome, which mediates inflammasome activation in response to the presence of double-stranded DNA (dsDNA) in the cytosol, leading to subsequent pyroptosis. Inflammasomes are supramolecular complexes that assemble in the cytosol in response to pathogens and other damage-associated signals and play critical roles in innate immunity and inflammation. Acts as a recognition receptor (PRR): specifically recognizes and binds dsDNA in the cytosol, and mediates the formation of the inflammasome polymeric complex composed of AIM2, CASP1 and PYCARD/ASC. Recruitment of pro-caspase-1 (proCASP1) to the AIM2 inflammasome promotes caspase-1 (CASP1) activation, which subsequently cleaves and activates inflammatory cytokines IL1B and IL18 and gasdermin-D (GSDMD), promoting cytokine secretion. In some cells, CASP1 activation mediates cleavage and activation of GSDMD, triggering pyroptosis without promoting cytokine secretion. Detects cytosolic dsDNA of viral and bacterial origin in a non-sequence-specific manner. Involved in the DNA damage response caused by acute ionizing radiation by mediating pyroptosis of intestinal epithelial cells and bone marrow cells in response to double-strand DNA breaks. Mechanistically, AIM2 senses DNA damage in the nucleus to mediate inflammasome assembly and inflammatory cell death. Also acts as a regulator of neurodevelopment via its role in the DNA damage response: acts by promoting neural cell death in response to DNA damage in the developing brain, thereby purging genetically compromised cells of the central nervous system. Pyroptosis mediated by the AIM2 inflammasome in response to DNA damage is dependent on GSDMD without involving IL1B and IL18 cytokine secretion. Also acts as a mediator of pyroptosis, necroptosis and apoptosis (PANoptosis), an integral part of host defense against pathogens, in response to bacterial infection. Can also trigger PYCARD/ASC-dependent, caspase-1-independent cell death that involves caspase-8 (CASP8). In terms of biological role, also acts as a tumor suppressor independently of its role in inflammatory response. Able to suppress overt cell proliferation in enterocytes: restricts stem cell proliferation in the intestinal mucosa in an inflammasome-independent manner, contributing to a decrease in the likelihood of colorectal cancer development. AIM2 suppresses cell proliferation by inhibiting phosphorylation of AKT1 at 'Ser-473', preventing AKT1 activation and AKT-mTOR signaling pathway. Inhibits AKT1 phosphorylation both by inhibiting the activity of PRKDC/DNA-PK kinase and promoting dephosphorylation by PP2A phosphatase. Also acts as a key regulator of regulatory T-cells (Treg) homeostasis by promoting their stability: acts by preventing AKT1 activation. Its role in Treg homeostasis is important to restain autoimmune diseases. This chain is Interferon-inducible protein AIM2, found in Mus musculus (Mouse).